The chain runs to 323 residues: tRNA-modifying protein YgfZ (323 aa).

Residues tryptophan 29 and tryptophan 182 each coordinate folate.

Belongs to the tRNA-modifying YgfZ family.

Its subcellular location is the cytoplasm. Its function is as follows. Folate-binding protein involved in regulating the level of ATP-DnaA and in the modification of some tRNAs. It is probably a key factor in regulatory networks that act via tRNA modification, such as initiation of chromosomal replication. This Vibrio atlanticus (strain LGP32) (Vibrio splendidus (strain Mel32)) protein is tRNA-modifying protein YgfZ.